We begin with the raw amino-acid sequence, 149 residues long: Calmodulin (149 aa).

Residue Ala-2 is modified to N-acetylalanine. EF-hand domains lie at 8-43 (EQIS…LGQN), 44-79 (PTEA…KMRD), 81-116 (DSEE…LGEK), and 117-149 (LTDN…MLSK). Positions 21, 23, 25, 27, 32, 57, 59, 61, 63, 68, 94, 96, 98, 100, 105, 130, 132, 134, 136, and 141 each coordinate Ca(2+).

The protein belongs to the calmodulin family.

In terms of biological role, calmodulin mediates the control of a large number of enzymes, ion channels and other proteins by Ca(2+). Among the enzymes to be stimulated by the calmodulin-Ca(2+) complex are a number of protein kinases and phosphatases. The polypeptide is Calmodulin (CMD1) (Pleurotus ostreatus (Oyster mushroom)).